The primary structure comprises 119 residues: UPF0212 protein Mlab_0931 (119 aa).

The protein belongs to the UPF0212 family.

The sequence is that of UPF0212 protein Mlab_0931 from Methanocorpusculum labreanum (strain ATCC 43576 / DSM 4855 / Z).